The chain runs to 267 residues: Glucosamine-6-phosphate deaminase (267 aa).

Asp-72 acts as the Proton acceptor; for enolization step in catalysis. Asp-141 serves as the catalytic For ring-opening step. His-143 serves as the catalytic Proton acceptor; for ring-opening step. The active-site For ring-opening step is the Glu-148.

This sequence belongs to the glucosamine/galactosamine-6-phosphate isomerase family. NagB subfamily. Homohexamer.

It catalyses the reaction alpha-D-glucosamine 6-phosphate + H2O = beta-D-fructose 6-phosphate + NH4(+). Its pathway is amino-sugar metabolism; N-acetylneuraminate degradation; D-fructose 6-phosphate from N-acetylneuraminate: step 5/5. With respect to regulation, allosterically activated by N-acetylglucosamine 6-phosphate (GlcNAc6P). Its function is as follows. Catalyzes the reversible isomerization-deamination of glucosamine 6-phosphate (GlcN6P) to form fructose 6-phosphate (Fru6P) and ammonium ion. The sequence is that of Glucosamine-6-phosphate deaminase from Pasteurella multocida (strain Pm70).